A 226-amino-acid chain; its full sequence is Glutathione peroxidase 3 (226 aa).

Residues 1 to 24 (MARLLQASCLLSLLLAGFLPQSRG) form the signal peptide. U73 is an active-site residue. U73 is a non-standard amino acid (selenocysteine).

Belongs to the glutathione peroxidase family. As to quaternary structure, homotetramer. Expressed intensively in the kidney and adrenal gland, and weakly in the cerebellum, heart, and lung. Secreted in plasma.

It localises to the secreted. The catalysed reaction is 2 glutathione + H2O2 = glutathione disulfide + 2 H2O. It carries out the reaction tert-butyl hydroperoxide + 2 glutathione = tert-butanol + glutathione disulfide + H2O. In terms of biological role, protects cells and enzymes from oxidative damage, by catalyzing the reduction of hydrogen peroxide, lipid peroxides and organic hydroperoxide, by glutathione. This Macaca fuscata fuscata (Japanese macaque) protein is Glutathione peroxidase 3.